The primary structure comprises 185 residues: Ribonuclease HII (185 aa).

An RNase H type-2 domain is found at 1 to 185 (MIILGIDEAG…KSYKPIQLLL (185 aa)). Residues D7, E8, and D99 each contribute to the a divalent metal cation site.

The protein belongs to the RNase HII family. Mn(2+) is required as a cofactor. It depends on Mg(2+) as a cofactor.

It is found in the cytoplasm. The catalysed reaction is Endonucleolytic cleavage to 5'-phosphomonoester.. Functionally, endonuclease that specifically degrades the RNA of RNA-DNA hybrids. In Francisella philomiragia subsp. philomiragia (strain ATCC 25017 / CCUG 19701 / FSC 153 / O#319-036), this protein is Ribonuclease HII.